A 482-amino-acid chain; its full sequence is tRNA sulfurtransferase (482 aa).

The 105-residue stretch at Leu-61–Arg-165 folds into the THUMP domain. ATP is bound by residues Leu-183 to Ile-184, Lys-265, Gly-287, and Gln-296. Cys-344 and Cys-456 form a disulfide bridge. Positions Phe-404 to Leu-482 constitute a Rhodanese domain. Cys-456 serves as the catalytic Cysteine persulfide intermediate.

It belongs to the ThiI family.

It is found in the cytoplasm. It catalyses the reaction [ThiI sulfur-carrier protein]-S-sulfanyl-L-cysteine + a uridine in tRNA + 2 reduced [2Fe-2S]-[ferredoxin] + ATP + H(+) = [ThiI sulfur-carrier protein]-L-cysteine + a 4-thiouridine in tRNA + 2 oxidized [2Fe-2S]-[ferredoxin] + AMP + diphosphate. It carries out the reaction [ThiS sulfur-carrier protein]-C-terminal Gly-Gly-AMP + S-sulfanyl-L-cysteinyl-[cysteine desulfurase] + AH2 = [ThiS sulfur-carrier protein]-C-terminal-Gly-aminoethanethioate + L-cysteinyl-[cysteine desulfurase] + A + AMP + 2 H(+). The protein operates within cofactor biosynthesis; thiamine diphosphate biosynthesis. Catalyzes the ATP-dependent transfer of a sulfur to tRNA to produce 4-thiouridine in position 8 of tRNAs, which functions as a near-UV photosensor. Also catalyzes the transfer of sulfur to the sulfur carrier protein ThiS, forming ThiS-thiocarboxylate. This is a step in the synthesis of thiazole, in the thiamine biosynthesis pathway. The sulfur is donated as persulfide by IscS. In Shigella boydii serotype 18 (strain CDC 3083-94 / BS512), this protein is tRNA sulfurtransferase.